We begin with the raw amino-acid sequence, 31 residues long: Cytochrome b6-f complex subunit 6 (31 aa).

A helical membrane pass occupies residues 4 to 24 (LTSYFGFLLAALTITFVLFIG).

Belongs to the PetL family. The 4 large subunits of the cytochrome b6-f complex are cytochrome b6, subunit IV (17 kDa polypeptide, PetD), cytochrome f and the Rieske protein, while the 4 small subunits are PetG, PetL, PetM and PetN. The complex functions as a dimer.

Its subcellular location is the plastid. The protein resides in the chloroplast thylakoid membrane. Functionally, component of the cytochrome b6-f complex, which mediates electron transfer between photosystem II (PSII) and photosystem I (PSI), cyclic electron flow around PSI, and state transitions. PetL is important for photoautotrophic growth as well as for electron transfer efficiency and stability of the cytochrome b6-f complex. This is Cytochrome b6-f complex subunit 6 from Oxybasis rubra (Red goosefoot).